Reading from the N-terminus, the 215-residue chain is Cytochrome b6 (215 aa).

Residues 32–52 traverse the membrane as a helical segment; it reads IFYCFGGITFTCFLVQVATGF. Cysteine 35 is a binding site for heme c. Residues histidine 86 and histidine 100 each contribute to the heme b site. 3 consecutive transmembrane segments (helical) span residues 90–110, 116–136, and 186–206; these read ASMM…TGGF, LTWV…VTGY, and LHTF…FLMI. Histidine 187 and histidine 202 together coordinate heme b.

It belongs to the cytochrome b family. PetB subfamily. In terms of assembly, the 4 large subunits of the cytochrome b6-f complex are cytochrome b6, subunit IV (17 kDa polypeptide, PetD), cytochrome f and the Rieske protein, while the 4 small subunits are PetG, PetL, PetM and PetN. The complex functions as a dimer. Heme b serves as cofactor. Requires heme c as cofactor.

The protein localises to the plastid. It is found in the chloroplast thylakoid membrane. Component of the cytochrome b6-f complex, which mediates electron transfer between photosystem II (PSII) and photosystem I (PSI), cyclic electron flow around PSI, and state transitions. This Auxenochlorella protothecoides (Green microalga) protein is Cytochrome b6.